A 461-amino-acid polypeptide reads, in one-letter code: Coronin-1A (461 aa).

Residue Ser-2 is modified to N-acetylserine. The residue at position 2 (Ser-2) is a Phosphoserine; by PKC. WD repeat units follow at residues 13 to 63 (HVFG…LVLP), 73 to 110 (NAPT…MVWE), 123 to 160 (PVVT…MVWD), 164 to 204 (GAAM…RIIE), 207 to 251 (KGTV…ALWD), 258 to 296 (PLSL…RYFE), and 302 to 349 (PFLH…EPIA). Positions 403–418 (ELRVNRGLDTGRRRAA) are enriched in basic and acidic residues. The tract at residues 403–432 (ELRVNRGLDTGRRRAAPEASGTPSSDAVSR) is disordered. Phosphothreonine; by PKC is present on Thr-412. Phosphoserine is present on Ser-422. Positions 424–460 (TPSSDAVSRLEEEMRKLQATVQELQKRLDRLEETVQA) form a coiled coil. Lys-449 is subject to N6-acetyllysine.

It belongs to the WD repeat coronin family. Binds actin. Post-translationally, phosphorylation at Thr-412 by PKC strongly down-regulates the association with actin. In terms of processing, polyubiquitinated by RNF128 with 'Lys-48'-linked chains, leading to proteasomal degradation. As to expression, expressed in brain, thymus, spleen, bone marrow and lymph node. Low in lung and gut.

Its subcellular location is the cytoplasm. It is found in the cytoskeleton. The protein localises to the cell cortex. It localises to the cytoplasmic vesicle. The protein resides in the phagosome membrane. Its function is as follows. May be a crucial component of the cytoskeleton of highly motile cells, functioning both in the invagination of large pieces of plasma membrane, as well as in forming protrusions of the plasma membrane involved in cell locomotion. In mycobacteria-infected cells, its retention on the phagosomal membrane prevents fusion between phagosomes and lysosomes. The protein is Coronin-1A (CORO1A) of Homo sapiens (Human).